Here is a 982-residue protein sequence, read N- to C-terminus: Little elongation complex subunit 2 (982 aa).

Phosphoserine is present on residues S17 and S326. Residues 410-427 (TTKVSKSPSPASTSTVPN) are compositionally biased toward polar residues. Disordered regions lie at residues 410 to 450 (TTKV…PDIS) and 473 to 504 (GMDG…PLIQ). Basic and acidic residues predominate over residues 479-497 (EECKNKDDQGFESCEKVSN). Phosphoserine is present on S571. T573 carries the phosphothreonine modification. Disordered regions lie at residues 595 to 623 (VGSN…NTAC), 672 to 697 (ENSK…KSGW), and 930 to 982 (PKSL…RKIT). Residues 597–610 (SNLSSRPASPNSSS) are compositionally biased toward low complexity. Polar residues-rich tracts occupy residues 611 to 623 (GQAS…NTAC) and 672 to 683 (ENSKQPSVSEQL). Residues 684–697 (SGPSDSSSWPKSGW) are compositionally biased toward low complexity. The span at 956-970 (SMETKSSCLPAQQVE) shows a compositional bias: polar residues.

This sequence belongs to the ICE2 family. As to quaternary structure, component of the little elongation complex (LEC), at least composed of ELL (ELL, ELL2 or ELL3), ZC3H8, ICE1 and ICE2. Interacts with ICE1 (via C-terminus domain). Interacts with ELL. In terms of tissue distribution, expressed at low levels in lung and testis.

Its subcellular location is the nucleus. In terms of biological role, component of the little elongation complex (LEC), a complex required to regulate small nuclear RNA (snRNA) gene transcription by RNA polymerase II and III. In Homo sapiens (Human), this protein is Little elongation complex subunit 2 (ICE2).